An 85-amino-acid polypeptide reads, in one-letter code: Large ribosomal subunit protein bL27 (85 aa).

The interval 1 to 22 (MAHKKAGGSTRNGRDSESKRLG) is disordered.

Belongs to the bacterial ribosomal protein bL27 family.

The polypeptide is Large ribosomal subunit protein bL27 (Vibrio vulnificus (strain CMCP6)).